Consider the following 93-residue polypeptide: Alpha-defensin 6/12 (93 aa).

Residues 1 to 19 (MKTLILLSALVLLAFQVQA) form the signal peptide. Residues 20-60 (DPIQNTDEETKTEEQPGEEDQAVSVSFGDPEGTSLQEESLR) constitute a propeptide that is removed on maturation. Residues 23–54 (QNTDEETKTEEQPGEEDQAVSVSFGDPEGTSL) form a disordered region. 3 disulfide bridges follow: Cys-64–Cys-92, Cys-66–Cys-81, and Cys-71–Cys-91.

Belongs to the alpha-defensin family. As to expression, paneth cells of the small bowel.

The protein resides in the secreted. Functionally, has broad-spectrum antimicrobial properties. Has antibacterial activity against the Gram-positive bacterium L.monocytogenes EGD and the Gram-negative bacteria E.coli ML-35p and avirulent S.typhimurium 7953, but not against the mouse-virulent S.typhimurium 14028S. Probably contributes to the antimicrobial barrier function of the small bowel mucosa. The polypeptide is Alpha-defensin 6/12 (Defa6) (Mus musculus (Mouse)).